The chain runs to 573 residues: uncharacterized protein (573 aa).

This is an uncharacterized protein from Treponema pallidum (strain Nichols).